We begin with the raw amino-acid sequence, 155 residues long: 6,7-dimethyl-8-ribityllumazine synthase (155 aa).

5-amino-6-(D-ribitylamino)uracil contacts are provided by residues Phe24, 58–60 (AFE), and 82–84 (VLI). 87-88 (AT) serves as a coordination point for (2S)-2-hydroxy-3-oxobutyl phosphate. Residue His90 is the Proton donor of the active site. 5-amino-6-(D-ribitylamino)uracil is bound at residue Phe115. Arg129 serves as a coordination point for (2S)-2-hydroxy-3-oxobutyl phosphate.

It belongs to the DMRL synthase family.

It carries out the reaction (2S)-2-hydroxy-3-oxobutyl phosphate + 5-amino-6-(D-ribitylamino)uracil = 6,7-dimethyl-8-(1-D-ribityl)lumazine + phosphate + 2 H2O + H(+). It participates in cofactor biosynthesis; riboflavin biosynthesis; riboflavin from 2-hydroxy-3-oxobutyl phosphate and 5-amino-6-(D-ribitylamino)uracil: step 1/2. Functionally, catalyzes the formation of 6,7-dimethyl-8-ribityllumazine by condensation of 5-amino-6-(D-ribitylamino)uracil with 3,4-dihydroxy-2-butanone 4-phosphate. This is the penultimate step in the biosynthesis of riboflavin. The protein is 6,7-dimethyl-8-ribityllumazine synthase of Chloroherpeton thalassium (strain ATCC 35110 / GB-78).